Consider the following 636-residue polypeptide: MAARPAFGIVRQLLRSNARGCSSGAPVTQPRPGEPSRPTREGLSLRLQFLQEHAAPFSAFLTDSFGRQHSYLRISLTEKCNLRCQYCMPEEGVPLTPKADLLTTEEILTLARLFVKEGVDKIRLTGGEPLIRPDVVDIVARLHGLEGLRTIGLTTNGINLARLLPRLQQAGLNAVNISLDTLVPAKFEFIVRRKGFHKVMEGIHKAIELGYKPVKVNCVVMRGLNEDELLDFVALTEGLPLDVRFIEYMPFDGNKWNFKKMVSYKEMLDTIRQRWPGLEKLPEEDSSTAKAFKIPGFQGQISFITSMSEHFCGTCNRLRITADGNLKVCLFGNSEVSLRDHLRAGASEEELLRIIGAAVGRKKRQHAGMFNIAQMKNRPMILIGVLLMLQDSPPARWSNFSWDPLRVRNPSARQCLSDQMASLWKRHCIPKALPLSQQCLGSGSPQRHYSSYPDPDTHSKCLSTGSQAPDAPSGPGPTSNQLTHVDSAGRASMVDVGGKPETERVAVASAMVLLGPVAFKLVQQNQLKKGDALVVAQLAGVQAAKLTSQLIPLCHHVALSHVQVHLELDSTRHAVLIQASCRARGPTGVEMEALTSAAMAALTVYDMCKAVSRDIVVTEVKLISKTGGQRGDFHRA.

Residues 1-383 (MAARPAFGIV…QMKNRPMILI (383 aa)) are molybdenum cofactor biosynthesis protein A. Positions 19–40 (RGCSSGAPVTQPRPGEPSRPTR) are disordered. S64 is modified (phosphoserine). Residues 64–279 (SFGRQHSYLR…TIRQRWPGLE (216 aa)) form the Radical SAM core domain. Position 73 (R73) interacts with GTP. The [4Fe-4S] cluster site is built by C80 and C84. Residue Y86 participates in S-adenosyl-L-methionine binding. Residue C87 participates in [4Fe-4S] cluster binding. A GTP-binding site is contributed by R123. G127 provides a ligand contact to S-adenosyl-L-methionine. T154 contributes to the GTP binding site. S178 contributes to the S-adenosyl-L-methionine binding site. K198 bears the N6-acetyllysine mark. K215 lines the GTP pocket. Residue M249 participates in S-adenosyl-L-methionine binding. Residues C312 and C315 each coordinate [4Fe-4S] cluster. GTP is bound at residue 317–319 (RLR). C329 contacts [4Fe-4S] cluster. The segment at 414–636 (QCLSDQMASL…GGQRGDFHRA (223 aa)) is molybdenum cofactor biosynthesis protein C. The interval 444–484 (SPQRHYSSYPDPDTHSKCLSTGSQAPDAPSGPGPTSNQLTH) is disordered. K528 bears the N6-acetyllysine mark. D606 serves as the catalytic For molybdenum cofactor biosynthesis protein C activity.

This sequence in the C-terminal section; belongs to the MoaC family. In the N-terminal section; belongs to the radical SAM superfamily. MoaA family. In terms of assembly, isoform Mocs1a and isoform Mocs1b probably form a heterooligomer. [4Fe-4S] cluster is required as a cofactor.

It catalyses the reaction GTP + AH2 + S-adenosyl-L-methionine = (8S)-3',8-cyclo-7,8-dihydroguanosine 5'-triphosphate + 5'-deoxyadenosine + L-methionine + A + H(+). The catalysed reaction is (8S)-3',8-cyclo-7,8-dihydroguanosine 5'-triphosphate = cyclic pyranopterin phosphate + diphosphate. It participates in cofactor biosynthesis; molybdopterin biosynthesis. Functionally, isoform Mocs1a and isoform Mocs1b probably form a complex that catalyzes the conversion of 5'-GTP to cyclic pyranopterin monophosphate (cPMP). Mocs1a catalyzes the cyclization of GTP to (8S)-3',8-cyclo-7,8-dihydroguanosine 5'-triphosphate and Mocs1b catalyzes the subsequent conversion of (8S)-3',8-cyclo-7,8-dihydroguanosine 5'-triphosphate to cPMP. This chain is Molybdenum cofactor biosynthesis protein 1 (Mocs1), found in Mus musculus (Mouse).